The sequence spans 381 residues: L-lactate dehydrogenase (381 aa).

Residues 1 to 380 (MIISASTDYR…SADSLVRELG (380 aa)) form the FMN hydroxy acid dehydrogenase domain. Residue tyrosine 24 coordinates substrate. Positions 106 and 127 each coordinate FMN. Residue tyrosine 129 participates in substrate binding. Threonine 155 is an FMN binding site. Arginine 164 is a substrate binding site. Lysine 251 lines the FMN pocket. The active-site Proton acceptor is histidine 275. A substrate-binding site is contributed by arginine 278. 306-330 (DSGIRTGLDVVRMIALGADSVLLGR) lines the FMN pocket.

Belongs to the FMN-dependent alpha-hydroxy acid dehydrogenase family. Homotetramer. Requires FMN as cofactor.

It is found in the cell inner membrane. It catalyses the reaction (S)-lactate + A = pyruvate + AH2. Functionally, catalyzes the conversion of L-lactate to pyruvate. Is coupled to the respiratory chain. This is L-lactate dehydrogenase from Pseudomonas aeruginosa (strain UCBPP-PA14).